Consider the following 100-residue polypeptide: Toxin Rv0299 (100 aa).

In terms of biological role, toxic component of a type II toxin-antitoxin (TA) system. Upon expression in M.smegmatis inhibits colony formation. Its toxic effect is neutralized by coexpression with cognate antitoxin Rv0298/MT0312. The polypeptide is Toxin Rv0299 (Mycobacterium tuberculosis (strain ATCC 25618 / H37Rv)).